The chain runs to 489 residues: MNAALIIIFGVLLLSIFLGIRAQKGKDMNLEQWTVGGRGFGTVFVFLLMAGEIYTTFTFLGGSGWAYGKGGPAFYIIAYGCLAYILSYWLLPAVWTYAKQHKLMSQSDFFTKKYNSPLLGILVSLVGIAALIPYLVLQLKGLGLIVSETSYGKITPTAAIWIGAVSITVYVMVSGIHGSAWISVVKDIMILVVVLFLGVYLPIHYYGGFQDMFQQIETAKPGFLTLPESGQSVAWFSSTVLLTALGFYMWPHTFSASYSAENPKVFRKNAIIMPLYQLVLLFVLFVGFAAILQVPDLNGADGDLSLLRLSLQAFDPWFVGIIGAAGLLTALVPGSMILMSASTLFAKNVYKVIAPRTTEQQVSALAKFLVPVIALISVYFTFKGGNTIVTLLLMGYSLVTQLFPALLFSLLKHNMVTKQGAFAGIIAGVGAVTYITMTETTIGTLFPALPQAAKDLNVGIVALLLNITVMMAVSLMTRKAKSAAADQAA.

13 consecutive transmembrane segments (helical) span residues 1 to 21 (MNAA…LGIR), 40 to 60 (FGTV…FTFL), 74 to 94 (FYII…LPAV), 117 to 137 (PLLG…YLVL), 158 to 178 (AAIW…GIHG), 188 to 208 (IMIL…YYGG), 234 to 254 (AWFS…PHTF), 271 to 291 (IIMP…FAAI), 318 to 338 (FVGI…SMIL), 362 to 382 (VSAL…YFTF), 388 to 408 (IVTL…ALLF), 422 to 442 (FAGI…ETTI), and 456 to 476 (LNVG…VSLM).

Belongs to the sodium:solute symporter (SSF) (TC 2.A.21) family.

It localises to the cell membrane. This is an uncharacterized protein from Bacillus subtilis (strain 168).